The primary structure comprises 492 residues: 3,6-anhydro-alpha-L-galactose dehydrogenase (492 aa).

NADP(+) contacts are provided by residues 160 to 161 (WN), 184 to 187 (KPSE), and 237 to 238 (GS). The active-site Proton acceptor is Glu-259. An NADP(+)-binding site is contributed by Leu-260. Cys-293 (nucleophile) is an active-site residue. Position 394 (Glu-394) interacts with NADP(+).

It belongs to the aldehyde dehydrogenase family.

The catalysed reaction is 3,6-anhydro-alpha-L-galactopyranose + NADP(+) + H2O = 3,6-anhydro-L-galactonate + NADPH + 2 H(+). Significantly inhibited by EDTA. Activity is enhanced by Fe(2+), but is strongly inhibited by Mn(2+), Cu(2+), Zn(2+), Ni(2+) and Co(2+). Functionally, involved in the degradation of 3,6-anhydro-L-galactose, which is the major monomeric sugar of red macroalgae. Catalyzes the oxidation of 3,6-anhydro-L-galactose (AHG) to form 3,6-anhydrogalactonate (AHGA). Shows broad substrate specificity, with maximum activity toward AHG. The enzyme activities toward D-fructose, D-galactose and D-ribose are between 40% and 50% of the maximum, but those toward L-rhamnose, L-glyceraldehyde, D-glyceraldehyde, L-fucose and D-glucose are much lower. The sequence is that of 3,6-anhydro-alpha-L-galactose dehydrogenase from Streptomyces coelicolor (strain ATCC BAA-471 / A3(2) / M145).